The chain runs to 446 residues: MDERDMVKRVKVFASSELKLNILLCLKYREMDVNDLQGVLGGRNTTILHAIRDMTDDYLISRGRQGYRLTNLGKIRGCVLESLMGVLDDLEARPDFWLNHDISSIPPEMLERLSMLRRSEMVSTNPASPLEIHERLESLLSTSKKISAILPLLIFPKDSKVFTNALRRGSRVDLLMTEKIAGSLLDDGSISAYEVERLLKFESFRLRLIGEDLKLALFVTESFLYLGLYRHDGVYDVGTGAIYLGESAVAWGMELFEYYAQRSRELDEGDLTRVFRSSIQPEAEAPPLAGEDPGAFDVMIVEDDLGHATLIRRIFEESSPRWRVHHASQLQDALRWIEESYGRPFLVVADYLLPDGCGLDLAGKAERPLEVGFPLIILTGFGSEKIAAQAFKSGAMDYVVKEADSIQRLPEIAEEALLRWRELKRRAAGGEGHPSPQEGQGLPLKV.

A Response regulatory domain is found at 297–416 (DVMIVEDDLG…QRLPEIAEEA (120 aa)). Residue Asp350 is modified to 4-aspartylphosphate.

Post-translationally, phosphorylated by FilI.

Its function is as follows. Member of the two-component regulatory system FilI/FilRs, which is involved in the regulation of methanogenesis. Regulates its own expression, expression of the filI-filR2 operon, and of genes involved in methanogenesis such as acs1, acs4 and mtrABC. Acts by binding to the promoters. The polypeptide is Methanogenesis regulatory protein FilR1 (Methanothrix harundinacea (strain 6Ac) (Methanosaeta harundinacea)).